We begin with the raw amino-acid sequence, 483 residues long: Cysteine--tRNA ligase (483 aa).

C29 provides a ligand contact to Zn(2+). The short motif at 31 to 41 (PTVYGHAHLGH) is the 'HIGH' region element. Positions 221, 246, and 250 each coordinate Zn(2+). Positions 278–282 (KMGKS) match the 'KMSKS' region motif. K281 is a binding site for ATP.

The protein belongs to the class-I aminoacyl-tRNA synthetase family. In terms of assembly, monomer. The cofactor is Zn(2+).

Its subcellular location is the cytoplasm. It catalyses the reaction tRNA(Cys) + L-cysteine + ATP = L-cysteinyl-tRNA(Cys) + AMP + diphosphate. The chain is Cysteine--tRNA ligase from Chlorobium luteolum (strain DSM 273 / BCRC 81028 / 2530) (Pelodictyon luteolum).